Here is a 99-residue protein sequence, read N- to C-terminus: Indole-3-acetic acid-induced protein ARG2 (99 aa).

The tract at residues 40–62 (RGGASIGGNMVPKSGEEKVRGGE) is disordered. Positions 53-62 (SGEEKVRGGE) are enriched in basic and acidic residues.

This Vigna radiata var. radiata (Mung bean) protein is Indole-3-acetic acid-induced protein ARG2 (ARG2).